A 619-amino-acid chain; its full sequence is Bifunctional glutathionylspermidine synthetase/amidase (619 aa).

The gsp amidase stretch occupies residues 2 to 195; sequence SKGTTSQDAP…LGWMIQTEDT (194 aa). The Peptidase C51 domain maps to 34–176; the sequence is DPQEYEDDAV…MVVENGCYTL (143 aa). Glutamine 58 contributes to the glutathionylspermidine binding site. The active-site S-(gamma-glutamyl-cysteinyl-glycyl)-cysteine intermediate is cysteine 59. Cysteine 59 is modified (cysteine sulfenic acid (-SOH); transient). Glutathionylspermidine contacts are provided by residues arginine 64, 78–81, and asparagine 149; that span reads VGMA. The interval 196-205 is linker; that stretch reads EYSLPQPEIA. Residues 206–619 are gsp synthetase; it reads GELLKISGAR…DIEPLIVVKK (414 aa). Glutathione is bound at residue arginine 316. 316-318 lines the ATP pocket; sequence RMD. Aspartate 318, glutamate 330, and asparagine 332 together coordinate Mg(2+). Serine 335 provides a ligand contact to glutathione. Residue glutamate 391 participates in spermidine binding. Positions 392 and 446 each coordinate glutathione. Residues lysine 498, lysine 533, 539 to 540, 568 to 571, glutamine 582, and 603 to 605 contribute to the ATP site; these read CG, QQLW, and LVI. Residue aspartate 610 coordinates spermidine.

In the C-terminal section; belongs to the glutathionylspermidine synthase preATP-grasp family. As to quaternary structure, homodimer. Post-translationally, oxidation of Cys-59 to sulfenic acid during oxidative stress selectively inhibits the amidase activity which leads to a rapid increase in the amounts of intracellular Gsp and Gsp S-thiolated proteins (GspSSPs).

The catalysed reaction is spermidine + glutathione + ATP = glutathionylspermidine + ADP + phosphate + H(+). The enzyme catalyses glutathionylspermidine + H2O = spermidine + glutathione. The protein operates within sulfur metabolism; glutathione metabolism. Its pathway is amine and polyamine metabolism; spermidine metabolism. With respect to regulation, when exposed to oxidative stress, Gsp amidase activity is transiently inhibited in vivo by oxidation of the catalytic Cys-59 thiol to sulfenic acid; this modification does not affect Gsp synthetase activity. Gsp amidase activity is negatively autoregulated by the Gsp synthetase domain, and is activated by the Gsp synthetase substrates, GSH and ATP-Mg(2+); the occupancy of the synthetase active site may initiate communication through the protein as manifest by the release of inhibition of the amidase activity. A tetrahedral phosphonate analog of glutathionylspermidine, designed as a mimic of the proposed tetrahedral intermediate for either reaction, inhibits the synthetase activity (Ki of 10 uM) but does not inhibit the amidase activity. Amidase activity is inhibited by iodoacetamide in vitro. Catalyzes the formation of an amide bond between glutathione (GSH) and spermidine coupled with hydrolysis of ATP; also catalyzes the opposing reaction, i.e. the hydrolysis of glutathionylspermidine (Gsp) back to glutathione and spermidine. The amidase active site can also hydrolyze Gsp-disulfide (Gsp-S-S-Gsp) to Gsp-SG and Gsp S-thiolated proteins (GspSSPs) to GSH S-thiolated protein (GSSPs). Likely acts synergistically with glutaredoxin to regulate the redox environment of E.coli and defend against oxidative damage. In vitro, the amidase active site also catalyzes hydrolysis of amide and ester derivatives of glutathione (e.g. glutathione ethyl ester and glutathione amide) but lacks activity toward acetylspermidine (N1 and N8) and acetylspermine (N1). The protein is Bifunctional glutathionylspermidine synthetase/amidase (gss) of Escherichia coli (strain K12).